Here is a 208-residue protein sequence, read N- to C-terminus: Small ribosomal subunit protein uS4A (208 aa).

Residues 98–164 (TRLDNVVYTL…AKIQSAIQAV (67 aa)) enclose the S4 RNA-binding domain.

This sequence belongs to the universal ribosomal protein uS4 family. In terms of assembly, part of the 30S ribosomal subunit. Contacts protein S5. The interaction surface between S4 and S5 is involved in control of translational fidelity.

One of the primary rRNA binding proteins, it binds directly to 16S rRNA where it nucleates assembly of the body of the 30S subunit. Its function is as follows. With S5 and S12 plays an important role in translational accuracy. In Bdellovibrio bacteriovorus (strain ATCC 15356 / DSM 50701 / NCIMB 9529 / HD100), this protein is Small ribosomal subunit protein uS4A.